The chain runs to 178 residues: Large ribosomal subunit protein uL6 (178 aa).

It belongs to the universal ribosomal protein uL6 family. In terms of assembly, part of the 50S ribosomal subunit.

In terms of biological role, this protein binds to the 23S rRNA, and is important in its secondary structure. It is located near the subunit interface in the base of the L7/L12 stalk, and near the tRNA binding site of the peptidyltransferase center. The protein is Large ribosomal subunit protein uL6 of Gluconobacter oxydans (strain 621H) (Gluconobacter suboxydans).